Consider the following 117-residue polypeptide: Ribosome-binding factor A (117 aa).

This sequence belongs to the RbfA family. Monomer. Binds 30S ribosomal subunits, but not 50S ribosomal subunits or 70S ribosomes.

It localises to the cytoplasm. Its function is as follows. One of several proteins that assist in the late maturation steps of the functional core of the 30S ribosomal subunit. Associates with free 30S ribosomal subunits (but not with 30S subunits that are part of 70S ribosomes or polysomes). Required for efficient processing of 16S rRNA. May interact with the 5'-terminal helix region of 16S rRNA. In Anaplasma marginale (strain St. Maries), this protein is Ribosome-binding factor A.